A 183-amino-acid chain; its full sequence is Ribosome-recycling factor (183 aa).

This sequence belongs to the RRF family.

The protein resides in the cytoplasm. Responsible for the release of ribosomes from messenger RNA at the termination of protein biosynthesis. May increase the efficiency of translation by recycling ribosomes from one round of translation to another. The protein is Ribosome-recycling factor of Buchnera aphidicola subsp. Baizongia pistaciae (strain Bp).